Here is a 328-residue protein sequence, read N- to C-terminus: Probable voltage-gated potassium channel subunit beta (328 aa).

Residues tryptophan 21, glutamine 27, and aspartate 49 each contribute to the NADP(+) site. Catalysis depends on tyrosine 54, which acts as the Proton donor/acceptor. 14 residues coordinate NADP(+): serine 152, glutamine 178, tryptophan 207, serine 208, proline 209, leucine 210, alanine 211, lysine 218, arginine 229, glycine 285, threonine 287, glutamine 291, glutamate 294, and asparagine 295.

Belongs to the shaker potassium channel beta subunit family. As to quaternary structure, forms heteromultimeric complexes with potassium channel alpha subunits. In terms of tissue distribution, expressed in late-developed leaves with the highest expression in the flag leaf (at protein level).

Probable accessory potassium channel protein which modulates the activity of the pore-forming alpha subunit. The protein is Probable voltage-gated potassium channel subunit beta (KOB1) of Oryza sativa subsp. japonica (Rice).